Consider the following 178-residue polypeptide: Protein GrpE (178 aa).

Composition is skewed to basic and acidic residues over residues 1–19 and 30–42; these read MAKHKQEEHPEDVEVKEEA and SPEKSELELANER. Residues 1–42 are disordered; that stretch reads MAKHKQEEHPEDVEVKEEAVETAEQAESASPEKSELELANER.

It belongs to the GrpE family. In terms of assembly, homodimer.

The protein resides in the cytoplasm. Functionally, participates actively in the response to hyperosmotic and heat shock by preventing the aggregation of stress-denatured proteins, in association with DnaK and GrpE. It is the nucleotide exchange factor for DnaK and may function as a thermosensor. Unfolded proteins bind initially to DnaJ; upon interaction with the DnaJ-bound protein, DnaK hydrolyzes its bound ATP, resulting in the formation of a stable complex. GrpE releases ADP from DnaK; ATP binding to DnaK triggers the release of the substrate protein, thus completing the reaction cycle. Several rounds of ATP-dependent interactions between DnaJ, DnaK and GrpE are required for fully efficient folding. The sequence is that of Protein GrpE from Streptococcus sanguinis (strain SK36).